The primary structure comprises 551 residues: Protein PLASTID TRANSCRIPTIONALLY ACTIVE 12, chloroplastic (551 aa).

The transit peptide at 1–47 (MASCSRTWLLPGMAPQATAQTVPRPLQSLKVFAGLPHRRRVLFSGVS) directs the protein to the chloroplast. Disordered regions lie at residues 76 to 161 (SSYF…EGES) and 463 to 529 (HSYN…DQLS). Over residues 109 to 119 (RVRAARAPAPV) the composition is skewed to low complexity. Acidic residues-rich tracts occupy residues 467–476 (EDSDDDEEDA) and 485–498 (SLED…DAED). Positions 505–516 (RNWSVLKTTGQA) are enriched in polar residues. Basic and acidic residues predominate over residues 518-529 (NPKEKSKKDQLS).

In terms of assembly, component of the plastid-encoded plastid RNA polymerase (PEP) complex.

Its subcellular location is the plastid. It localises to the chloroplast. Required for the activity of the plastid-encoded RNA polymerase (PEP) and full expression of genes transcribed by PEP. Required for the proper build-up and formation of the PEP-complex. Binds single-stranded (ss) DNA and RNA, but not double-stranded (ds) DNA. The protein is Protein PLASTID TRANSCRIPTIONALLY ACTIVE 12, chloroplastic of Oryza sativa subsp. japonica (Rice).